We begin with the raw amino-acid sequence, 147 residues long: UPF0208 membrane protein CGSHiEE_06015 (147 aa).

2 helical membrane-spanning segments follow: residues 38–58 and 67–87; these read FAQK…QIYA and IAIL…YWLG.

The protein belongs to the UPF0208 family.

The protein localises to the cell inner membrane. This is UPF0208 membrane protein CGSHiEE_06015 from Haemophilus influenzae (strain PittEE).